A 474-amino-acid chain; its full sequence is Salutaridinol 7-O-acetyltransferase (474 aa).

The active-site Proton acceptor is the His163. The segment at 213–234 (ERLTSPSGMSEIPFSSTPEDTE) is disordered. Positions 214-230 (RLTSPSGMSEIPFSSTP) are enriched in polar residues. Catalysis depends on Asp416, which acts as the Proton acceptor.

Belongs to the plant acyltransferase family. As to expression, expressed in root, stem, leaf and capsule of the mature plant. Restricted to sieve elements of the phloem adjacent or proximal to laticifers.

It carries out the reaction (7S)-salutaridinol + acetyl-CoA = (7S)-O-acetylsalutaridinol + CoA. It participates in alkaloid biosynthesis; morphine biosynthesis. In terms of biological role, acetyltransferase involved in biosynthesis of morphinan-type benzylisoquinoline and opiate alkaloids natural products. Catalyzes the conversion of the phenanthrene alkaloid salutaridinol to salutaridinol-7-O-acetate, the immediate precursor of thebaine along the morphine biosynthetic pathway. Conversion of 7-O-acetylsalutaridinol into thebaine is spontaneous. This Papaver somniferum (Opium poppy) protein is Salutaridinol 7-O-acetyltransferase.